We begin with the raw amino-acid sequence, 165 residues long: Phosphopantetheine adenylyltransferase (165 aa).

Thr10 contacts substrate. ATP is bound by residues 10 to 11 (TF) and His18. Residues Lys42, Leu74, and Arg88 each contribute to the substrate site. ATP-binding positions include 89 to 91 (GLR), Glu99, and 124 to 130 (NAFISSS).

Belongs to the bacterial CoaD family. As to quaternary structure, homohexamer. It depends on Mg(2+) as a cofactor.

Its subcellular location is the cytoplasm. The catalysed reaction is (R)-4'-phosphopantetheine + ATP + H(+) = 3'-dephospho-CoA + diphosphate. Its pathway is cofactor biosynthesis; coenzyme A biosynthesis; CoA from (R)-pantothenate: step 4/5. Its function is as follows. Reversibly transfers an adenylyl group from ATP to 4'-phosphopantetheine, yielding dephospho-CoA (dPCoA) and pyrophosphate. This is Phosphopantetheine adenylyltransferase from Helicobacter hepaticus (strain ATCC 51449 / 3B1).